A 62-amino-acid chain; its full sequence is Large ribosomal subunit protein eL37 (62 aa).

Residues Cys-20, Cys-23, Cys-35, and Cys-38 each contribute to the Zn(2+) site. The C4-type zinc-finger motif lies at 20–38 (CRRCGRRSYNVAKGYCAAC).

The protein belongs to the eukaryotic ribosomal protein eL37 family. Zn(2+) is required as a cofactor.

Binds to the 23S rRNA. This chain is Large ribosomal subunit protein eL37 (rpl37e), found in Aeropyrum pernix (strain ATCC 700893 / DSM 11879 / JCM 9820 / NBRC 100138 / K1).